The chain runs to 156 residues: Translation initiation factor IF-1, chloroplastic (156 aa).

Residues 1–81 (MASLSWWNPA…RRTTSIQCLS (81 aa)) constitute a chloroplast transit peptide. Positions 51–79 (KSLLVKTQQQSKKKKNNSTNSRRTTSIQC) are disordered. Low complexity predominate over residues 67–76 (NSTNSRRTTS). Residues 82–151 (QEQKWTHEGS…SKGRIIYRLR (70 aa)) form the S1-like domain.

It belongs to the IF-1 family. As to quaternary structure, component of the 30S ribosomal translation pre-initiation complex which assembles on the 30S ribosome in the order IF-2 and IF-3, IF-1 and N-formylmethionyl-tRNA(fMet); mRNA recruitment can occur at any time during PIC assembly.

The protein localises to the plastid. It localises to the chloroplast. One of the essential components for the initiation of protein synthesis. Stabilizes the binding of IF-2 and IF-3 on the 30S subunit to which N-formylmethionyl-tRNA(fMet) subsequently binds. Helps modulate mRNA selection, yielding the 30S pre-initiation complex (PIC). Upon addition of the 50S ribosomal subunit IF-1, IF-2 and IF-3 are released leaving the mature 70S translation initiation complex. The chain is Translation initiation factor IF-1, chloroplastic (infA) from Solanum lycopersicum (Tomato).